A 332-amino-acid chain; its full sequence is L-lactate dehydrogenase A chain (332 aa).

NAD(+) contacts are provided by residues 29–57 (GAVGMACAISILMKDLADELALVDVVEDK) and Arg99. Substrate-binding residues include Arg106, Asn138, and Arg169. Asn138 serves as a coordination point for NAD(+). His193 acts as the Proton acceptor in catalysis. Thr248 is a binding site for substrate.

Belongs to the LDH/MDH superfamily. LDH family. As to quaternary structure, homotetramer.

It localises to the cytoplasm. It carries out the reaction (S)-lactate + NAD(+) = pyruvate + NADH + H(+). Its pathway is fermentation; pyruvate fermentation to lactate; (S)-lactate from pyruvate: step 1/1. In terms of biological role, interconverts simultaneously and stereospecifically pyruvate and lactate with concomitant interconversion of NADH and NAD(+). The polypeptide is L-lactate dehydrogenase A chain (LDHA) (Caiman crocodilus apaporiensis (Rio Apaporis caiman)).